The following is a 282-amino-acid chain: Putative hydrolase Bcep18194_B0137 (282 aa).

Mg(2+) is bound by residues E124, E126, and D155.

Belongs to the FAH family. Mg(2+) is required as a cofactor.

The polypeptide is Putative hydrolase Bcep18194_B0137 (Burkholderia lata (strain ATCC 17760 / DSM 23089 / LMG 22485 / NCIMB 9086 / R18194 / 383)).